The sequence spans 232 residues: Large ribosomal subunit protein uL1 (232 aa).

The protein belongs to the universal ribosomal protein uL1 family. Part of the 50S ribosomal subunit.

Its function is as follows. Binds directly to 23S rRNA. The L1 stalk is quite mobile in the ribosome, and is involved in E site tRNA release. Functionally, protein L1 is also a translational repressor protein, it controls the translation of the L11 operon by binding to its mRNA. The polypeptide is Large ribosomal subunit protein uL1 (Thermosipho africanus (strain TCF52B)).